A 321-amino-acid polypeptide reads, in one-letter code: MSRPERLQPGVKLRDADKVARIPVKVVPSERETMLRKPDWLRVKLPASSQRIDDIKKALRKNELHSVCEEASCPNLAECFNHGTATFMILGAICTRRCPFCDVAHGRPLKPDANEPKKMAQTIKDMKLKYVVITSVDRDDLRDGGAQHFADCIREIRLLNPSIKIEILVPDFRGRIDAALDILATEPPDVFNHNLETAPMHYRKARPGANYQWSLDLLKKFKERHPDIPTKSGLMMGLGETNDQIAEVLKDLRAHNVEMLTLGQYLQPSKFHLRVERYVPPAEFDELREFAESIGFTHAACGPMVRSSYHADLQAQGKEVK.

Cysteine 68, cysteine 73, cysteine 79, cysteine 94, cysteine 98, cysteine 101, and serine 308 together coordinate [4Fe-4S] cluster. A Radical SAM core domain is found at 80–297 (FNHGTATFMI…REFAESIGFT (218 aa)).

It belongs to the radical SAM superfamily. Lipoyl synthase family. Requires [4Fe-4S] cluster as cofactor.

The protein resides in the cytoplasm. The enzyme catalyses [[Fe-S] cluster scaffold protein carrying a second [4Fe-4S](2+) cluster] + N(6)-octanoyl-L-lysyl-[protein] + 2 oxidized [2Fe-2S]-[ferredoxin] + 2 S-adenosyl-L-methionine + 4 H(+) = [[Fe-S] cluster scaffold protein] + N(6)-[(R)-dihydrolipoyl]-L-lysyl-[protein] + 4 Fe(3+) + 2 hydrogen sulfide + 2 5'-deoxyadenosine + 2 L-methionine + 2 reduced [2Fe-2S]-[ferredoxin]. Its pathway is protein modification; protein lipoylation via endogenous pathway; protein N(6)-(lipoyl)lysine from octanoyl-[acyl-carrier-protein]: step 2/2. Catalyzes the radical-mediated insertion of two sulfur atoms into the C-6 and C-8 positions of the octanoyl moiety bound to the lipoyl domains of lipoate-dependent enzymes, thereby converting the octanoylated domains into lipoylated derivatives. This chain is Lipoyl synthase, found in Shewanella sediminis (strain HAW-EB3).